We begin with the raw amino-acid sequence, 202 residues long: MTRSHNHSATITTARFDQARAEAAVRELLIAVGEDPDREGLRDTPARVARAYQEIFAGLYTDPDEVLKTMFDEQHDEMVLVKDIPMYSTCEHHLVSFHGVAHVGYIPGVDGRVTGLSKLARVVDLYAKRPQVQERLTGQIADALMRRLDPRGVIVVIEAEHLCMAMRGIRKPGAVTTTSAVRGQFKTDKASRAEALDLILRK.

Residues cysteine 90, histidine 93, and cysteine 163 each coordinate Zn(2+).

Belongs to the GTP cyclohydrolase I family. In terms of assembly, toroid-shaped homodecamer, composed of two pentamers of five dimers.

It carries out the reaction GTP + H2O = 7,8-dihydroneopterin 3'-triphosphate + formate + H(+). It functions in the pathway cofactor biosynthesis; 7,8-dihydroneopterin triphosphate biosynthesis; 7,8-dihydroneopterin triphosphate from GTP: step 1/1. This chain is GTP cyclohydrolase 1, found in Mycolicibacterium vanbaalenii (strain DSM 7251 / JCM 13017 / BCRC 16820 / KCTC 9966 / NRRL B-24157 / PYR-1) (Mycobacterium vanbaalenii).